The sequence spans 436 residues: Citrate synthase (436 aa).

Catalysis depends on residues His-311 and Asp-370.

Belongs to the citrate synthase family.

The catalysed reaction is oxaloacetate + acetyl-CoA + H2O = citrate + CoA + H(+). It participates in carbohydrate metabolism; tricarboxylic acid cycle; isocitrate from oxaloacetate: step 1/2. The sequence is that of Citrate synthase (gltA) from Rickettsia typhi (strain ATCC VR-144 / Wilmington).